The sequence spans 379 residues: Succinyl-diaminopimelate desuccinylase (379 aa).

Residue H70 participates in Zn(2+) binding. Residue D72 is part of the active site. D103 is a Zn(2+) binding site. E137 functions as the Proton acceptor in the catalytic mechanism. Zn(2+) is bound by residues E138, E166, and H352.

The protein belongs to the peptidase M20A family. DapE subfamily. Homodimer. Zn(2+) serves as cofactor. Co(2+) is required as a cofactor.

The enzyme catalyses N-succinyl-(2S,6S)-2,6-diaminopimelate + H2O = (2S,6S)-2,6-diaminopimelate + succinate. Its pathway is amino-acid biosynthesis; L-lysine biosynthesis via DAP pathway; LL-2,6-diaminopimelate from (S)-tetrahydrodipicolinate (succinylase route): step 3/3. Catalyzes the hydrolysis of N-succinyl-L,L-diaminopimelic acid (SDAP), forming succinate and LL-2,6-diaminopimelate (DAP), an intermediate involved in the bacterial biosynthesis of lysine and meso-diaminopimelic acid, an essential component of bacterial cell walls. The protein is Succinyl-diaminopimelate desuccinylase of Burkholderia vietnamiensis (strain G4 / LMG 22486) (Burkholderia cepacia (strain R1808)).